Reading from the N-terminus, the 337-residue chain is Fructose-1,6-bisphosphatase class 1 (337 aa).

The Mg(2+) site is built by Glu-94, Asp-116, Leu-118, and Asp-119. Substrate contacts are provided by residues 119–122, Asn-210, and Lys-276; that span reads DGSS. Glu-282 contributes to the Mg(2+) binding site.

It belongs to the FBPase class 1 family. As to quaternary structure, homotetramer. It depends on Mg(2+) as a cofactor.

Its subcellular location is the cytoplasm. The enzyme catalyses beta-D-fructose 1,6-bisphosphate + H2O = beta-D-fructose 6-phosphate + phosphate. It functions in the pathway carbohydrate biosynthesis; gluconeogenesis. The polypeptide is Fructose-1,6-bisphosphatase class 1 (Burkholderia lata (strain ATCC 17760 / DSM 23089 / LMG 22485 / NCIMB 9086 / R18194 / 383)).